The following is a 239-amino-acid chain: Large ribosomal subunit protein mL67 (239 aa).

The protein belongs to the mitochondrion-specific ribosomal protein mL67 family. Component of the mitochondrial large ribosomal subunit (mt-LSU).

It is found in the nucleus. Its subcellular location is the mitochondrion. Component of the mitochondrial ribosome (mitoribosome), a dedicated translation machinery responsible for the synthesis of mitochondrial genome-encoded proteins, including at least some of the essential transmembrane subunits of the mitochondrial respiratory chain. The mitoribosomes are attached to the mitochondrial inner membrane and translation products are cotranslationally integrated into the membrane. mL67/MHR1 also has extraribosomal functions, being involved in regulation of mitochondrial DNA recombination, maintenance and repair, and generation of homoplasmic cells. mL67/MHR1 also acts as transcription factor involved in regulation of RNA polymerase II-dependent transcription. This Candida albicans (strain SC5314 / ATCC MYA-2876) (Yeast) protein is Large ribosomal subunit protein mL67 (MHR1).